The following is a 299-amino-acid chain: Glycine--tRNA ligase alpha subunit (299 aa).

Belongs to the class-II aminoacyl-tRNA synthetase family. Tetramer of two alpha and two beta subunits.

It localises to the cytoplasm. The enzyme catalyses tRNA(Gly) + glycine + ATP = glycyl-tRNA(Gly) + AMP + diphosphate. In Pediococcus pentosaceus (strain ATCC 25745 / CCUG 21536 / LMG 10740 / 183-1w), this protein is Glycine--tRNA ligase alpha subunit.